A 353-amino-acid polypeptide reads, in one-letter code: Probable dual-specificity RNA methyltransferase RlmN (353 aa).

E104 functions as the Proton acceptor in the catalytic mechanism. A Radical SAM core domain is found at 112 to 341; it reads DGGRKTICIS…ILNRRSPGKD (230 aa). A disulfide bond links C119 and C346. [4Fe-4S] cluster contacts are provided by C126, C130, and C133. S-adenosyl-L-methionine-binding positions include 173–174, S205, 228–230, and N304; these read GE and SLN. C346 serves as the catalytic S-methylcysteine intermediate.

This sequence belongs to the radical SAM superfamily. RlmN family. The cofactor is [4Fe-4S] cluster.

Its subcellular location is the cytoplasm. The catalysed reaction is adenosine(2503) in 23S rRNA + 2 reduced [2Fe-2S]-[ferredoxin] + 2 S-adenosyl-L-methionine = 2-methyladenosine(2503) in 23S rRNA + 5'-deoxyadenosine + L-methionine + 2 oxidized [2Fe-2S]-[ferredoxin] + S-adenosyl-L-homocysteine. The enzyme catalyses adenosine(37) in tRNA + 2 reduced [2Fe-2S]-[ferredoxin] + 2 S-adenosyl-L-methionine = 2-methyladenosine(37) in tRNA + 5'-deoxyadenosine + L-methionine + 2 oxidized [2Fe-2S]-[ferredoxin] + S-adenosyl-L-homocysteine. Specifically methylates position 2 of adenine 2503 in 23S rRNA and position 2 of adenine 37 in tRNAs. In Leptospira interrogans serogroup Icterohaemorrhagiae serovar copenhageni (strain Fiocruz L1-130), this protein is Probable dual-specificity RNA methyltransferase RlmN.